We begin with the raw amino-acid sequence, 1059 residues long: Disks large-associated protein 2 (1059 aa).

Disordered stretches follow at residues 31–56 and 244–311; these read GEPE…EEDI and TKSH…SDST. A compositionally biased stretch (polar residues) spans 244-261; it reads TKSHSLEGSSKSNINGTK. The span at 262 to 271 shows a compositional bias: basic and acidic residues; that stretch reads SEGRMDDHHQ. Residues 272-285 are compositionally biased toward basic residues; it reads SHLSKHSKRSKSKE. A phosphoserine mark is found at serine 302, serine 308, serine 390, and serine 456. Disordered regions lie at residues 446-466 and 632-669; these read GDEE…VALR and VTAQ…NSMD. Over residues 632 to 645 the composition is skewed to polar residues; the sequence is VTAQSSTESTQDAY. Phosphoserine is present on residues serine 667, serine 670, serine 673, and serine 720. A disordered region spans residues 723 to 756; it reads VQDSEFPDHQPYPRSDVETATDSDTESRGLREYH. Threonine 743 is subject to Phosphothreonine. At serine 745 the chain carries Phosphoserine. Positions 747–756 are enriched in basic and acidic residues; sequence TESRGLREYH. Serine 776, serine 811, serine 983, and serine 1012 each carry phosphoserine. Positions 985 to 1024 are disordered; it reads ERKEERKIPPPIPKKPPKGKFPITREKSLDLPDRQRQEAR. Residues 1007–1024 are compositionally biased toward basic and acidic residues; it reads ITREKSLDLPDRQRQEAR.

The protein belongs to the SAPAP family. Interacts with DLG4/PSD-95. Expressed in various brain areas.

The protein resides in the cell membrane. Its subcellular location is the postsynaptic density. The protein localises to the synapse. May play a role in the molecular organization of synapses and neuronal cell signaling. Could be an adapter protein linking ion channel to the subsynaptic cytoskeleton. May induce enrichment of PSD-95/SAP90 at the plasma membrane. This is Disks large-associated protein 2 from Rattus norvegicus (Rat).